A 217-amino-acid polypeptide reads, in one-letter code: Trichothecene biosynthesis transcription regulator TRI6 (217 aa).

The C2H2-type zinc finger occupies 185–215 (VRCPWHDQEGQQCLRVFSRVDNMRDHYRRIH).

It is found in the nucleus. Functionally, transcriptional activator of part of the core trichothecene biosynthesis cluster. This is Trichothecene biosynthesis transcription regulator TRI6 from Fusarium sporotrichioides.